The sequence spans 172 residues: Large ribosomal subunit protein uL10 (172 aa).

This sequence belongs to the universal ribosomal protein uL10 family. Part of the ribosomal stalk of the 50S ribosomal subunit. The N-terminus interacts with L11 and the large rRNA to form the base of the stalk. The C-terminus forms an elongated spine to which L12 dimers bind in a sequential fashion forming a multimeric L10(L12)X complex.

Functionally, forms part of the ribosomal stalk, playing a central role in the interaction of the ribosome with GTP-bound translation factors. The sequence is that of Large ribosomal subunit protein uL10 from Clostridium tetani (strain Massachusetts / E88).